Here is a 432-residue protein sequence, read N- to C-terminus: Adenylosuccinate synthetase (432 aa).

GTP is bound by residues 13–19 (GDEGKGK) and 41–43 (GHT). The active-site Proton acceptor is Asp-14. Asp-14 and Gly-41 together coordinate Mg(2+). Residues 14–17 (DEGK), 39–42 (NAGH), Thr-130, Arg-144, Gln-225, Thr-240, and Arg-304 contribute to the IMP site. The active-site Proton donor is His-42. Position 300 to 306 (300 to 306 (ATTGRSR)) interacts with substrate. GTP contacts are provided by residues Arg-306, 332–334 (KLD), and 415–417 (STG).

It belongs to the adenylosuccinate synthetase family. As to quaternary structure, homodimer. The cofactor is Mg(2+).

The protein localises to the cytoplasm. It carries out the reaction IMP + L-aspartate + GTP = N(6)-(1,2-dicarboxyethyl)-AMP + GDP + phosphate + 2 H(+). Its pathway is purine metabolism; AMP biosynthesis via de novo pathway; AMP from IMP: step 1/2. Its function is as follows. Plays an important role in the de novo pathway of purine nucleotide biosynthesis. Catalyzes the first committed step in the biosynthesis of AMP from IMP. The sequence is that of Adenylosuccinate synthetase from Yersinia pestis bv. Antiqua (strain Antiqua).